A 361-amino-acid chain; its full sequence is MMSLSTTLKPLSHFSPFVKRHNPKTNNTLFTLDTHNFTNSFWSKRGGSVSHRKHTVVAVYEAPDHVESSWRRLLSEVVVVRTKRSFWERSWTSWDVSKLVIFVGTHLLSLLAPFYFSWEAFWVFPWLVFINGICITLSYHRNLSHRSFDLPKWLEYLFAYGGVLAFQGDPIEWVSNHRYHHKHCETQRDPHSPTQGFWFSHMAWIFDTSSILENCGGEENVDDLVRQPFYRFLQRTVLLHMMAYSFLFYFCGGMPLLVWGIGITIAVRLHLTFLVNSVCHIWGTRAWNTSDFSKNNWWVAILTLGEGWHNNHHAFEFSARHGLEWWQLDITWCLIRFLEAIGLATNVKLPTETQMKGKALV.

A chloroplast-targeting transit peptide spans 1-57 (MMSLSTTLKPLSHFSPFVKRHNPKTNNTLFTLDTHNFTNSFWSKRGGSVSHRKHTVV). Transmembrane regions (helical) follow at residues 99–118 (LVIF…YFSW) and 122–139 (WVFP…TLSY). Residues 140 to 145 (HRNLSH) carry the Histidine box-1 motif. Residues 177–181 (HRYHH) carry the Histidine box-2 motif. A helical membrane pass occupies residues 246-266 (FLFYFCGGMPLLVWGIGITIA). The Histidine box-3 motif lies at 309-313 (HNNHH).

It belongs to the fatty acid desaturase type 1 family. It depends on Fe(2+) as a cofactor.

The protein localises to the plastid. It is found in the chloroplast membrane. Its pathway is lipid metabolism; polyunsaturated fatty acid biosynthesis. The sequence is that of Probable lipid desaturase ADS3.2, chloroplastic from Arabidopsis thaliana (Mouse-ear cress).